A 373-amino-acid polypeptide reads, in one-letter code: Phospho-N-acetylmuramoyl-pentapeptide-transferase (373 aa).

A run of 11 helical transmembrane segments spans residues 16-36, 46-66, 93-113, 120-140, 157-177, 185-205, 216-236, 242-262, 270-290, 298-318, and 350-369; these read WWTK…AASF, LLSL…SWGI, PTMG…FVSV, QLLA…FDDW, LLLQ…QHWI, LGIS…VFLA, LDGL…VQLM, GNPV…GFLM, VFMG…VAIL, LVMG…VWVF, and MVVR…GLLL.

The protein belongs to the glycosyltransferase 4 family. MraY subfamily. Mg(2+) is required as a cofactor.

The protein resides in the cell inner membrane. The enzyme catalyses UDP-N-acetyl-alpha-D-muramoyl-L-alanyl-gamma-D-glutamyl-meso-2,6-diaminopimeloyl-D-alanyl-D-alanine + di-trans,octa-cis-undecaprenyl phosphate = di-trans,octa-cis-undecaprenyl diphospho-N-acetyl-alpha-D-muramoyl-L-alanyl-D-glutamyl-meso-2,6-diaminopimeloyl-D-alanyl-D-alanine + UMP. The protein operates within cell wall biogenesis; peptidoglycan biosynthesis. Its function is as follows. Catalyzes the initial step of the lipid cycle reactions in the biosynthesis of the cell wall peptidoglycan: transfers peptidoglycan precursor phospho-MurNAc-pentapeptide from UDP-MurNAc-pentapeptide onto the lipid carrier undecaprenyl phosphate, yielding undecaprenyl-pyrophosphoryl-MurNAc-pentapeptide, known as lipid I. The protein is Phospho-N-acetylmuramoyl-pentapeptide-transferase of Prochlorococcus marinus (strain MIT 9313).